The primary structure comprises 788 residues: Integrin beta-6 (788 aa).

A signal peptide spans 1 to 21; sequence MGIELLCLFFLFLGRNDHVQG. The 50-residue stretch at 22 to 71 folds into the PSI domain; it reads GCALGGAETCEDCLLIGPQCAWCSQENFTYLSGVGERCDTPANLLAKGCQ. Over 22-709 the chain is Extracellular; it reads GCALGGAETC…KDCPKPPNSP (688 aa). Intrachain disulfides connect Cys-23–Cys-41, Cys-31–Cys-454, Cys-34–Cys-59, Cys-44–Cys-70, Cys-197–Cys-204, Cys-252–Cys-293, Cys-394–Cys-406, Cys-426–Cys-452, Cys-456–Cys-476, Cys-467–Cys-479, Cys-481–Cys-490, Cys-492–Cys-519, Cys-502–Cys-517, Cys-511–Cys-522, Cys-524–Cys-537, Cys-539–Cys-560, Cys-544–Cys-558, Cys-552–Cys-563, Cys-565–Cys-574, Cys-576–Cys-599, Cys-583–Cys-597, Cys-591–Cys-602, Cys-604–Cys-614, Cys-617–Cys-620, Cys-624–Cys-670, Cys-630–Cys-649, Cys-633–Cys-645, and Cys-678–Cys-702. N-linked (GlcNAc...) asparagine glycosylation is found at Asn-48 and Asn-97. The region spanning 131-371 is the VWFA domain; it reads YPVDLYYLMD…QLIISAYEEL (241 aa). 3 residues coordinate Mg(2+): Asp-140, Ser-142, and Ser-144. The Ca(2+) site is built by Ser-144, Asp-147, Asp-148, and Glu-179. The Ca(2+) site is built by Asn-235, Asp-237, Pro-239, and Glu-240. Mg(2+) is bound at residue Glu-240. N-linked (GlcNAc...) asparagine glycosylation is present at Asn-260. Ca(2+)-binding residues include Asp-271 and Lys-355. Residue Asn-387 is glycosylated (N-linked (GlcNAc...) asparagine). Asn-418 carries an N-linked (GlcNAc...) asparagine glycan. I-EGF domains are found at residues 456-491, 492-538, 539-575, and 576-615; these read CQKE…PHCE, CGED…PYCQ, CDDF…EYCN, and CTTS…LTCE. 2 N-linked (GlcNAc...) asparagine glycosylation sites follow: Asn-463 and Asn-471. Residues 710–730 form a helical membrane-spanning segment; sequence MIMLGVSLAILLIGVVLLCIW. The tract at residues 731-758 is interaction with HAX1; that stretch reads KLLVSFHDRKEVAKFEAERSKAKWQTGT. The Cytoplasmic segment spans residues 731 to 788; sequence KLLVSFHDRKEVAKFEAERSKAKWQTGTNPLYRGSTSTFKNVTYKHREKQKVDLSMDG.

This sequence belongs to the integrin beta chain family. As to quaternary structure, heterodimer of an alpha and a beta subunit. Interacts with FLNB. Interacts with HAX1. ITGAV:ITGB6 interacts with FBN1. ITGAV:ITGB6 interacts with TGFB1.

The protein localises to the cell membrane. It is found in the cell junction. The protein resides in the focal adhesion. In terms of biological role, integrin alpha-V:beta-6 (ITGAV:ITGB6) is a receptor for fibronectin and cytotactin. It recognizes the sequence R-G-D in its ligands. ITGAV:ITGB6 acts as a receptor for fibrillin-1 (FBN1) and mediates R-G-D-dependent cell adhesion to FBN1. Integrin alpha-V:beta-6 (ITGAV:ITGB6) mediates R-G-D-dependent release of transforming growth factor beta-1 (TGF-beta-1) from regulatory Latency-associated peptide (LAP), thereby playing a key role in TGF-beta-1 activation. This Sus scrofa (Pig) protein is Integrin beta-6 (ITGB6).